A 626-amino-acid polypeptide reads, in one-letter code: UPF0313 protein MM_1287 (626 aa).

The disordered stretch occupies residues 206 to 227 (GKGKEKAGEQDESENATEEVAK). The 270-residue stretch at 320–589 (ALEMVKFSLT…AMQRALMHYR (270 aa)) folds into the Radical SAM core domain. Positions 334, 338, and 341 each coordinate [4Fe-4S] cluster.

Belongs to the UPF0313 family. [4Fe-4S] cluster serves as cofactor.

This is UPF0313 protein MM_1287 from Methanosarcina mazei (strain ATCC BAA-159 / DSM 3647 / Goe1 / Go1 / JCM 11833 / OCM 88) (Methanosarcina frisia).